Reading from the N-terminus, the 448-residue chain is Adenylosuccinate synthetase (448 aa).

Residues 22–28 and 50–52 each bind GTP; these read GDEGKGK and GHT. Residue aspartate 23 is the Proton acceptor of the active site. Mg(2+) is bound by residues aspartate 23 and glycine 50. IMP-binding positions include 23-26, 48-51, threonine 139, arginine 153, glutamine 234, threonine 249, and arginine 321; these read DEGK and NAGH. Histidine 51 serves as the catalytic Proton donor. Position 317–323 (317–323) interacts with substrate; sequence SVTGRPR. Residues arginine 323, 349 to 351, and 431 to 433 each bind GTP; these read KLD and STG.

It belongs to the adenylosuccinate synthetase family. In terms of assembly, homodimer. The cofactor is Mg(2+).

The protein localises to the cytoplasm. The catalysed reaction is IMP + L-aspartate + GTP = N(6)-(1,2-dicarboxyethyl)-AMP + GDP + phosphate + 2 H(+). The protein operates within purine metabolism; AMP biosynthesis via de novo pathway; AMP from IMP: step 1/2. Plays an important role in the de novo pathway of purine nucleotide biosynthesis. Catalyzes the first committed step in the biosynthesis of AMP from IMP. This Paraburkholderia phytofirmans (strain DSM 17436 / LMG 22146 / PsJN) (Burkholderia phytofirmans) protein is Adenylosuccinate synthetase.